The chain runs to 410 residues: uncharacterized protein (410 aa).

The N-terminal stretch at 1 to 41 (MVKSFRMKALIAGAAVAAAVSAGAVSDVPAAKVLQPTAAYA) is a signal peptide.

In terms of assembly, interacts with PcrA, Pdp, YclM, YkvL, YhcQ and YomL. The interaction with PcrA is not essential for cell viability or repair of UV-induced lesions.

The protein localises to the secreted. Its function is as follows. Increases the processivity of the PcrA helicase, but does not bind to DNA. This is an uncharacterized protein from Bacillus subtilis (strain 168).